Here is a 938-residue protein sequence, read N- to C-terminus: Isoleucine--tRNA ligase (938 aa).

The 'HIGH' region motif lies at 58–68 (PYANGNIHIGH). Glu561 is a binding site for L-isoleucyl-5'-AMP. Residues 602–606 (KMSKS) carry the 'KMSKS' region motif. Position 605 (Lys605) interacts with ATP. Zn(2+) contacts are provided by Cys901, Cys904, Cys921, and Cys924.

This sequence belongs to the class-I aminoacyl-tRNA synthetase family. IleS type 1 subfamily. As to quaternary structure, monomer. The cofactor is Zn(2+).

The protein resides in the cytoplasm. It carries out the reaction tRNA(Ile) + L-isoleucine + ATP = L-isoleucyl-tRNA(Ile) + AMP + diphosphate. Its function is as follows. Catalyzes the attachment of isoleucine to tRNA(Ile). As IleRS can inadvertently accommodate and process structurally similar amino acids such as valine, to avoid such errors it has two additional distinct tRNA(Ile)-dependent editing activities. One activity is designated as 'pretransfer' editing and involves the hydrolysis of activated Val-AMP. The other activity is designated 'posttransfer' editing and involves deacylation of mischarged Val-tRNA(Ile). The protein is Isoleucine--tRNA ligase of Yersinia enterocolitica serotype O:8 / biotype 1B (strain NCTC 13174 / 8081).